The following is a 194-amino-acid chain: Small ribosomal subunit protein eS7 (194 aa).

It belongs to the eukaryotic ribosomal protein eS7 family.

This is Small ribosomal subunit protein eS7 (rps-7) from Caenorhabditis elegans.